The following is a 535-amino-acid chain: Flavin-containing monooxygenase 1 (535 aa).

Alanine 2 is subject to N-acetylalanine. At 2–513 (AKRVAIVGAG…TRIVQESSSP (512 aa)) the chain is on the lumenal side. Residues 9-13 (GAGVS), glutamate 32, 40-41 (LW), and 61-62 (NS) contribute to the FAD site. Residues 60 to 61 (SN) and 195 to 198 (SGTD) each bind NADP(+). The chain crosses the membrane as a helical span at residues 514–534 (FESLLKLFAVLALLVSVFLIF). Residue leucine 535 is a topological domain, cytoplasmic.

It belongs to the FMO family. It depends on FAD as a cofactor. As to expression, liver.

It is found in the endoplasmic reticulum membrane. It catalyses the reaction hypotaurine + NADPH + O2 + H(+) = taurine + NADP(+) + H2O. The catalysed reaction is hypotaurine + NADH + O2 + H(+) = taurine + NAD(+) + H2O. It carries out the reaction trimethylamine + NADPH + O2 = trimethylamine N-oxide + NADP(+) + H2O. The enzyme catalyses N,N-dimethylaniline + NADPH + O2 + H(+) = N,N-dimethylaniline N-oxide + NADP(+) + H2O. Its function is as follows. Broad spectrum monooxygenase that catalyzes the oxygenation of a wide variety of nitrogen- and sulfur-containing compounds including xenobiotics. Catalyzes the S-oxygenation of hypotaurine to produce taurine, an organic osmolyte involved in cell volume regulation as well as a variety of cytoprotective and developmental processes. In vitro, catalyzes the N-oxygenation of trimethylamine (TMA) to produce trimethylamine N-oxide (TMAO) and could therefore participate to the detoxification of this compound that is generated by the action of gut microbiota from dietary precursors such as choline, choline containing compounds, betaine or L-carnitine. This Oryctolagus cuniculus (Rabbit) protein is Flavin-containing monooxygenase 1 (FMO1).